The primary structure comprises 258 residues: 14-3-3-like protein 16R (258 aa).

The interval 238 to 258 (DMQDDGTDEIKEAAPKPDNNE) is disordered. Positions 245 to 258 (DEIKEAAPKPDNNE) are enriched in basic and acidic residues.

This sequence belongs to the 14-3-3 family.

The chain is 14-3-3-like protein 16R from Solanum tuberosum (Potato).